Here is a 396-residue protein sequence, read N- to C-terminus: 1-deoxy-D-xylulose 5-phosphate reductoisomerase (396 aa).

The NADPH site is built by Thr-13, Gly-14, Ser-15, Ile-16, and Asn-127. A 1-deoxy-D-xylulose 5-phosphate-binding site is contributed by Lys-128. Glu-129 serves as a coordination point for NADPH. Asp-153 provides a ligand contact to Mn(2+). The 1-deoxy-D-xylulose 5-phosphate site is built by Ser-154, Glu-155, Ser-184, and His-207. Residue Glu-155 coordinates Mn(2+). Gly-213 serves as a coordination point for NADPH. The 1-deoxy-D-xylulose 5-phosphate site is built by Ser-220, Asn-225, Lys-226, and Glu-229. Glu-229 is a Mn(2+) binding site.

This sequence belongs to the DXR family. The cofactor is Mg(2+). Requires Mn(2+) as cofactor.

It catalyses the reaction 2-C-methyl-D-erythritol 4-phosphate + NADP(+) = 1-deoxy-D-xylulose 5-phosphate + NADPH + H(+). Its pathway is isoprenoid biosynthesis; isopentenyl diphosphate biosynthesis via DXP pathway; isopentenyl diphosphate from 1-deoxy-D-xylulose 5-phosphate: step 1/6. Inhibited by fosmidomycin and 3-(N-acetyl-N-hydroxyamino)-propylphosphonic acid (FR-900098). In terms of biological role, catalyzes the NADPH-dependent rearrangement and reduction of 1-deoxy-D-xylulose-5-phosphate (DXP) to 2-C-methyl-D-erythritol 4-phosphate (MEP). The sequence is that of 1-deoxy-D-xylulose 5-phosphate reductoisomerase from Pseudomonas aeruginosa (strain ATCC 15692 / DSM 22644 / CIP 104116 / JCM 14847 / LMG 12228 / 1C / PRS 101 / PAO1).